Here is a 61-residue protein sequence, read N- to C-terminus: Small ribosomal subunit protein uS14B (61 aa).

The Zn(2+) site is built by Cys-24, Cys-27, Cys-40, and Cys-43.

This sequence belongs to the universal ribosomal protein uS14 family. Zinc-binding uS14 subfamily. In terms of assembly, part of the 30S ribosomal subunit. Contacts proteins S3 and S10. Zn(2+) serves as cofactor.

In terms of biological role, binds 16S rRNA, required for the assembly of 30S particles and may also be responsible for determining the conformation of the 16S rRNA at the A site. This Kineococcus radiotolerans (strain ATCC BAA-149 / DSM 14245 / SRS30216) protein is Small ribosomal subunit protein uS14B.